The primary structure comprises 379 residues: Sulfate adenylyltransferase (379 aa).

It belongs to the sulfate adenylyltransferase family.

The enzyme catalyses sulfate + ATP + H(+) = adenosine 5'-phosphosulfate + diphosphate. Its pathway is sulfur metabolism; hydrogen sulfide biosynthesis; sulfite from sulfate: step 1/3. The chain is Sulfate adenylyltransferase from Cenarchaeum symbiosum (strain A).